The chain runs to 181 residues: K99 fimbrial protein (181 aa).

Residues 1–22 form the signal peptide; it reads MKKTLLAIILGGMAFATTNASA. Cysteines 38 and 79 form a disulfide.

The protein belongs to the fimbrial protein family.

The protein resides in the fimbrium. In terms of biological role, fimbriae (also called pili), polar filaments radiating from the surface of the bacterium to a length of 0.5-1.5 micrometers and numbering 100-300 per cell, enable bacteria to colonize the epithelium of specific host organs. FanC is the main component of the K99 fimbriae. The polypeptide is K99 fimbrial protein (fanC) (Escherichia coli).